The chain runs to 196 residues: Phosphoheptose isomerase (196 aa).

The region spanning 36-196 is the SIS domain; sequence MTNCLINGGK…GIDALLLGVE (161 aa). 51–53 contributes to the substrate binding site; the sequence is NGG. Zn(2+) contacts are provided by His-60 and Glu-64. Substrate-binding positions include Glu-64, 93–94, 119–121, Ser-124, and Gln-174; these read ND and STS. Zn(2+) is bound by residues Gln-174 and His-182.

Belongs to the SIS family. GmhA subfamily. Homotetramer. It depends on Zn(2+) as a cofactor.

It localises to the cytoplasm. The catalysed reaction is 2 D-sedoheptulose 7-phosphate = D-glycero-alpha-D-manno-heptose 7-phosphate + D-glycero-beta-D-manno-heptose 7-phosphate. Its pathway is carbohydrate biosynthesis; D-glycero-D-manno-heptose 7-phosphate biosynthesis; D-glycero-alpha-D-manno-heptose 7-phosphate and D-glycero-beta-D-manno-heptose 7-phosphate from sedoheptulose 7-phosphate: step 1/1. In terms of biological role, catalyzes the isomerization of sedoheptulose 7-phosphate in D-glycero-D-manno-heptose 7-phosphate. The polypeptide is Phosphoheptose isomerase (Dechloromonas aromatica (strain RCB)).